A 274-amino-acid chain; its full sequence is MINKFKKTIETSFEKKEHLKKCVDPLLKNTIISIINLLDKGKIRVAEKKNGTWITNQWIKKSILIYFCIFKNKLIISENMNFFDKISMKFEKWDHDDFCKHKIRAVPCSFVRKGSFIAKNSVIMPSYINIGAYIGENSTIDTWSTIGSCAQIGKNVHISGGVGIGGVLEPVQNNPTIIEDNCFIGARSEIVEGVVVESGSVISMGVFIGKSTKIYDSINNKIYYGRIPKKSVVIPGSLPSKNNRFNINCAIIIKKPDHETKRKIKMNSILHLNN.

Residues R104 and D141 each contribute to the substrate site.

Belongs to the transferase hexapeptide repeat family. As to quaternary structure, homotrimer.

Its subcellular location is the cytoplasm. The enzyme catalyses (S)-2,3,4,5-tetrahydrodipicolinate + succinyl-CoA + H2O = (S)-2-succinylamino-6-oxoheptanedioate + CoA. It functions in the pathway amino-acid biosynthesis; L-lysine biosynthesis via DAP pathway; LL-2,6-diaminopimelate from (S)-tetrahydrodipicolinate (succinylase route): step 1/3. The polypeptide is 2,3,4,5-tetrahydropyridine-2,6-dicarboxylate N-succinyltransferase (Wigglesworthia glossinidia brevipalpis).